The chain runs to 597 residues: MTPIVTVLICLGLSLGPRTRVQTGTIPKPTLWAEPDSVITQGSPVTLSCQGSLEAQEYRLYREKKSASWITRIRPELVKNGQFHIPSITWEHTGRYGCQYYSRARWSELSDPLVLVMTGAYPKPTLSAQPSPVVTSGGRVTLQCESQVAFGGFILCKEGEDEHPQCLNSQPHARGSSRAIFSVGPVSPNRRWSHRCYGYDLNSPYVWSSPSDLLELLVPGVSKKPSLSVQPGPVMAPGESLTLQCVSDVGYDRFVLYKEGERDLRQLPGRQPQAGLSQANFTLGPVSRSYGGQYRCYGAHNLSSECSAPSDPLDILITGQIRGTPFISVQPGPTVASGENVTLLCQSWRQFHTFLLTKAGAADAPLRLRSIHEYPKYQAEFPMSPVTSAHAGTYRCYGSLNSDPYLLSHPSEPLELVVSGPSMGSSPPPTGPISTPGPEDQPLTPTGSDPQSGLGRHLGVVIGILVAVVLLLLLLLLLFLILRHRRQGKHWTSTQRKADFQHPAGAVGPEPTDRGLQWRSSPAADAQEENLYAAVKDTQPEDGVEMDTRAAASEAPQDVTYAQLHSLTLRRKATEPPPSQEREPPAEPSIYATLAIH.

The signal sequence occupies residues 1–21; it reads MTPIVTVLICLGLSLGPRTRV. The Extracellular segment spans residues 22–460; it reads QTGTIPKPTL…QSGLGRHLGV (439 aa). 4 Ig-like C2-type domains span residues 27 to 110, 111 to 229, 230 to 318, and 330 to 419; these read PKPT…SELS, DPLV…SLSV, QPGP…ILIT, and QPGP…LVVS. 4 disulfides stabilise this stretch: C49–C98, C144–C196, C156–C166, and C245–C296. Residues N280, N301, and N340 are each glycosylated (N-linked (GlcNAc...) asparagine). An intrachain disulfide couples C345 to C396. The tract at residues 417 to 451 is disordered; the sequence is VVSGPSMGSSPPPTGPISTPGPEDQPLTPTGSDPQ. Residues 461-481 form a helical membrane-spanning segment; it reads VIGILVAVVLLLLLLLLLFLI. Residues 482-597 are Cytoplasmic-facing; that stretch reads LRHRRQGKHW…PSIYATLAIH (116 aa). The interval 491–523 is disordered; sequence WTSTQRKADFQHPAGAVGPEPTDRGLQWRSSPA. 3 short sequence motifs (ITIM motif) span residues 530–535, 559–564, and 589–594; these read NLYAAV, VTYAQL, and SIYATL. Residues 537–597 are disordered; it reads DTQPEDGVEM…PSIYATLAIH (61 aa).

In terms of assembly, binds PTPN6 when phosphorylated. Binds FCGR1A. Interacts with peptide-bound HLA-G-B2M; this interaction is direct. Interacts with peptide-bound HLA-F-B2M; this interaction is direct. In terms of processing, phosphorylated on tyrosine residues. Dephosphorylated by PTPN6. In terms of tissue distribution, expressed in monocytes and at lower levels in myeloid and plasmacytoid dendritic cells. Expressed in tolerogenic IL10-producing dendritic cells. Expressed in myeloid-derived suppressor cells during pregnancy. Detected at low levels in natural killer (NK) cells. Expressed in B cells.

The protein resides in the cell membrane. Receptor for class I MHC antigens. Recognizes a broad spectrum of HLA-A, HLA-B, HLA-C, HLA-G and HLA-F alleles. Involved in the down-regulation of the immune response and the development of tolerance. Recognizes HLA-G in complex with B2M/beta-2 microglobulin and a nonamer self-peptide (peptide-bound HLA-G-B2M) triggering differentiation of type 1 regulatory T cells and myeloid-derived suppressor cells, both of which actively maintain maternal-fetal tolerance. Competes with CD8A for binding to class I MHC antigens. Inhibits FCGR1A-mediated phosphorylation of cellular proteins and mobilization of intracellular calcium ions. The polypeptide is Leukocyte immunoglobulin-like receptor subfamily B member 2 (Homo sapiens (Human)).